Consider the following 381-residue polypeptide: Cobalt-precorrin-5B C(1)-methyltransferase (381 aa).

The protein belongs to the CbiD family.

The catalysed reaction is Co-precorrin-5B + S-adenosyl-L-methionine = Co-precorrin-6A + S-adenosyl-L-homocysteine. It participates in cofactor biosynthesis; adenosylcobalamin biosynthesis; cob(II)yrinate a,c-diamide from sirohydrochlorin (anaerobic route): step 6/10. Catalyzes the methylation of C-1 in cobalt-precorrin-5B to form cobalt-precorrin-6A. The polypeptide is Cobalt-precorrin-5B C(1)-methyltransferase (Prochlorococcus marinus (strain NATL1A)).